The following is a 297-amino-acid chain: HTH-type transcriptional regulator ArgP (297 aa).

In terms of domain architecture, HTH lysR-type spans 4–60; it reads PDYRTLQALDAVIRERGFERAAQKLCITQSAVSQRIKQLENMFGQPLLVRTVPPRPT. The H-T-H motif DNA-binding region spans 21–40; that stretch reads FERAAQKLCITQSAVSQRIK.

It belongs to the LysR transcriptional regulatory family. As to quaternary structure, homodimer.

In terms of biological role, controls the transcription of genes involved in arginine and lysine metabolism. The protein is HTH-type transcriptional regulator ArgP of Klebsiella pneumoniae (strain 342).